Here is a 58-residue protein sequence, read N- to C-terminus: Large ribosomal subunit protein uL30 (58 aa).

It belongs to the universal ribosomal protein uL30 family. Part of the 50S ribosomal subunit.

This Blochmanniella floridana protein is Large ribosomal subunit protein uL30.